A 178-amino-acid chain; its full sequence is Deoxyuridine 5'-triphosphate nucleotidohydrolase (178 aa).

Belongs to the dUTPase family. Mg(2+) serves as cofactor.

It catalyses the reaction dUTP + H2O = dUMP + diphosphate + H(+). Its pathway is pyrimidine metabolism; dUMP biosynthesis; dUMP from dCTP (dUTP route): step 2/2. Its function is as follows. This enzyme is involved in nucleotide metabolism: it produces dUMP, the immediate precursor of thymidine nucleotides and it decreases the intracellular concentration of dUTP so that uracil cannot be incorporated into DNA. In Fowl adenovirus A serotype 1 (strain CELO / Phelps) (FAdV-1), this protein is Deoxyuridine 5'-triphosphate nucleotidohydrolase.